The following is a 499-amino-acid chain: Cobyric acid synthase (499 aa).

The 184-residue stretch at 266–449 (RLEIAVVRLP…LHGLFDNHLW (184 aa)) folds into the GATase cobBQ-type domain. The active-site Nucleophile is C344. Residue H441 is part of the active site.

The protein belongs to the CobB/CobQ family. CobQ subfamily.

The protein operates within cofactor biosynthesis; adenosylcobalamin biosynthesis. In terms of biological role, catalyzes amidations at positions B, D, E, and G on adenosylcobyrinic A,C-diamide. NH(2) groups are provided by glutamine, and one molecule of ATP is hydrogenolyzed for each amidation. This is Cobyric acid synthase from Synechococcus sp. (strain JA-2-3B'a(2-13)) (Cyanobacteria bacterium Yellowstone B-Prime).